Reading from the N-terminus, the 419-residue chain is Gamma-glutamyl phosphate reductase (419 aa).

It belongs to the gamma-glutamyl phosphate reductase family.

The protein resides in the cytoplasm. The catalysed reaction is L-glutamate 5-semialdehyde + phosphate + NADP(+) = L-glutamyl 5-phosphate + NADPH + H(+). Its pathway is amino-acid biosynthesis; L-proline biosynthesis; L-glutamate 5-semialdehyde from L-glutamate: step 2/2. Functionally, catalyzes the NADPH-dependent reduction of L-glutamate 5-phosphate into L-glutamate 5-semialdehyde and phosphate. The product spontaneously undergoes cyclization to form 1-pyrroline-5-carboxylate. This Nitratidesulfovibrio vulgaris (strain ATCC 29579 / DSM 644 / CCUG 34227 / NCIMB 8303 / VKM B-1760 / Hildenborough) (Desulfovibrio vulgaris) protein is Gamma-glutamyl phosphate reductase.